The chain runs to 452 residues: Putrescine hydroxycinnamoyltransferase (452 aa).

Catalysis depends on H151, which acts as the Proton acceptor. Residues 213–234 are disordered; that stretch reads PAAGVDGDVGGDHKQQHGHGGE. Basic and acidic residues predominate over residues 222 to 234; sequence GGDHKQQHGHGGE. D398 serves as the catalytic Proton acceptor.

It belongs to the plant acyltransferase family. As to expression, highly expressed in roots. Expressed at low levels in flowers.

Hydroxycinnamoyl transferase that catalyzes the transfer of an acyl from p-coumaryol-CoA to putrescine, to produce coumaroyl putrescine. Can use feruloyl-CoA, caffeoyl-CoA and sinapoyl-CoA as acyl donors. Seems to be able to transfer the acyl group from feruloyl-CoA to the acyl acceptors agmatine and spermidine. This is Putrescine hydroxycinnamoyltransferase from Oryza sativa subsp. japonica (Rice).